A 656-amino-acid polypeptide reads, in one-letter code: Chaperone protein DnaK (656 aa).

Thr-204 bears the Phosphothreonine; by autocatalysis mark. The tract at residues 602–656 (KLAERVYAKKGGAAGAPPGGEAEGEPQAQAGGKKEDVVDAEFEEVKDEKKKDEDK) is disordered. Residues 620-632 (GGEAEGEPQAQAG) show a composition bias toward low complexity. The span at 647–656 (KDEKKKDEDK) shows a compositional bias: basic and acidic residues.

This sequence belongs to the heat shock protein 70 family.

In terms of biological role, acts as a chaperone. This is Chaperone protein DnaK from Coxiella burnetii (strain CbuG_Q212) (Coxiella burnetii (strain Q212)).